The following is a 229-amino-acid chain: Large ribosomal subunit protein uL1 (229 aa).

Belongs to the universal ribosomal protein uL1 family. In terms of assembly, part of the 50S ribosomal subunit.

Its function is as follows. Binds directly to 23S rRNA. The L1 stalk is quite mobile in the ribosome, and is involved in E site tRNA release. In terms of biological role, protein L1 is also a translational repressor protein, it controls the translation of the L11 operon by binding to its mRNA. This is Large ribosomal subunit protein uL1 from Clostridium kluyveri (strain ATCC 8527 / DSM 555 / NBRC 12016 / NCIMB 10680 / K1).